The primary structure comprises 733 residues: uncharacterized protein (733 aa).

A helical transmembrane segment spans residues 174-194; sequence WAVMILASLRPELFGPIIIAG.

The protein localises to the membrane. This is an uncharacterized protein from Rhizobium meliloti (Ensifer meliloti).